Consider the following 118-residue polypeptide: UPF0102 protein Nwi_0116 (118 aa).

Belongs to the UPF0102 family.

The sequence is that of UPF0102 protein Nwi_0116 from Nitrobacter winogradskyi (strain ATCC 25391 / DSM 10237 / CIP 104748 / NCIMB 11846 / Nb-255).